The sequence spans 237 residues: tRNA (guanine-N(7)-)-methyltransferase (237 aa).

S-adenosyl-L-methionine-binding residues include glutamate 67, glutamate 92, aspartate 119, and aspartate 141. The active site involves aspartate 141. Substrate-binding positions include lysine 145, aspartate 177, and 214–217; that span reads TRYE.

It belongs to the class I-like SAM-binding methyltransferase superfamily. TrmB family.

It catalyses the reaction guanosine(46) in tRNA + S-adenosyl-L-methionine = N(7)-methylguanosine(46) in tRNA + S-adenosyl-L-homocysteine. The protein operates within tRNA modification; N(7)-methylguanine-tRNA biosynthesis. In terms of biological role, catalyzes the formation of N(7)-methylguanine at position 46 (m7G46) in tRNA. In Ruegeria pomeroyi (strain ATCC 700808 / DSM 15171 / DSS-3) (Silicibacter pomeroyi), this protein is tRNA (guanine-N(7)-)-methyltransferase.